Here is a 104-residue protein sequence, read N- to C-terminus: Phosphoribosyl-ATP pyrophosphatase (104 aa).

It belongs to the PRA-PH family.

Its subcellular location is the cytoplasm. It catalyses the reaction 1-(5-phospho-beta-D-ribosyl)-ATP + H2O = 1-(5-phospho-beta-D-ribosyl)-5'-AMP + diphosphate + H(+). It participates in amino-acid biosynthesis; L-histidine biosynthesis; L-histidine from 5-phospho-alpha-D-ribose 1-diphosphate: step 2/9. In Streptococcus thermophilus (strain ATCC BAA-491 / LMD-9), this protein is Phosphoribosyl-ATP pyrophosphatase.